A 204-amino-acid chain; its full sequence is Proteasome subunit beta type-3 (204 aa).

This sequence belongs to the peptidase T1B family. In terms of assembly, the 26S proteasome consists of a 20S proteasome core and two 19S regulatory subunits. The 20S proteasome core is composed of 28 subunits that are arranged in four stacked rings, resulting in a barrel-shaped structure. The two end rings are each formed by seven alpha subunits, and the two central rings are each formed by seven beta subunits. The catalytic chamber with the active sites is on the inside of the barrel.

Its subcellular location is the cytoplasm. It is found in the nucleus. Its function is as follows. Non-catalytic component of the proteasome, a multicatalytic proteinase complex which is characterized by its ability to cleave peptides with Arg, Phe, Tyr, Leu, and Glu adjacent to the leaving group at neutral or slightly basic pH. The proteasome has an ATP-dependent proteolytic activity. The protein is Proteasome subunit beta type-3 (PBC1) of Picea mariana (Black spruce).